The following is a 155-amino-acid chain: MSSNSKLLIDIQTASPAIEAALKKIASSALIKKWIKAATPLSGLLTLRFVNSTEGKKLNAAFRKKHYATNVLTFPYEHSKSALSADIIFCLPVIRKEAKEQGKTVKAHLAHLIVHGCLHAQGFDHEHEKETKKMEKLEVALLKKLGFTDPYLTTQ.

Residues His-115, His-119, and His-125 each contribute to the Zn(2+) site.

It belongs to the endoribonuclease YbeY family. It depends on Zn(2+) as a cofactor.

It localises to the cytoplasm. Functionally, single strand-specific metallo-endoribonuclease involved in late-stage 70S ribosome quality control and in maturation of the 3' terminus of the 16S rRNA. The protein is Endoribonuclease YbeY of Polynucleobacter asymbioticus (strain DSM 18221 / CIP 109841 / QLW-P1DMWA-1) (Polynucleobacter necessarius subsp. asymbioticus).